The sequence spans 444 residues: Ras-related protein RabX (444 aa).

GTP is bound at residue glycine 29–asparagine 36. The short motif at leucine 51–tyrosine 58 is the Effector region element. Glutamate 73 to isoleucine 77 is a GTP binding site. Residues glutamate 91 to serine 136 form a disordered region. A compositionally biased stretch (low complexity) spans asparagine 95–asparagine 135. Asparagine 207–asparagine 210 is a GTP binding site. 2 disordered regions span residues threonine 213–isoleucine 232 and leucine 298–leucine 401. 2 stretches are compositionally biased toward low complexity: residues serine 217–isoleucine 232 and asparagine 303–asparagine 399. Cysteine 439 carries S-palmitoyl cysteine lipidation. The residue at position 441 (cysteine 441) is a Cysteine methyl ester. Cysteine 441 carries the S-geranylgeranyl cysteine lipid modification. Residues asparagine 442–methionine 444 constitute a propeptide, removed in mature form.

It belongs to the small GTPase superfamily. Rab family.

It localises to the cell membrane. This chain is Ras-related protein RabX (rabX), found in Dictyostelium discoideum (Social amoeba).